Here is a 164-residue protein sequence, read N- to C-terminus: MKLNEIQDNPGSSKSRMRVGRGIGSGKGKTCGRGVKGQKARTGVAIKGFEGGQMPLHRRLPKRGFYNPFGLDYNEINLGRLQEAVDAGRIDVAAVVTNESLIASGLISKPRDGVKILGVGELKAKLSFQVAAASKSAVAAIEAAGGSIELLKRAPEAPTASAEA.

Positions 1-14 (MKLNEIQDNPGSSK) are enriched in polar residues. The disordered stretch occupies residues 1–35 (MKLNEIQDNPGSSKSRMRVGRGIGSGKGKTCGRGV). Residues 21–35 (RGIGSGKGKTCGRGV) are compositionally biased toward gly residues.

This sequence belongs to the universal ribosomal protein uL15 family. Part of the 50S ribosomal subunit.

Functionally, binds to the 23S rRNA. This is Large ribosomal subunit protein uL15 from Methylocella silvestris (strain DSM 15510 / CIP 108128 / LMG 27833 / NCIMB 13906 / BL2).